Reading from the N-terminus, the 125-residue chain is Flagellar protein FliT (125 aa).

The required for homodimerization stretch occupies residues 1-50; the sequence is MDNKMDLLSAYQRILSLSEQMLNLAKNEKWDELVDMEITYLKAVEVISHS. A fliD binding region spans residues 60–98; that stretch reads LQQKMTNILQIILDNENEIKKLLQKRLDELSKLIKQASQ.

The protein belongs to the FliT family. As to quaternary structure, homodimer. Interacts with FliD and FlhC.

It is found in the cytoplasm. The protein localises to the cytosol. In terms of biological role, dual-function protein that regulates the transcription of class 2 flagellar operons and that also acts as an export chaperone for the filament-capping protein FliD. As a transcriptional regulator, acts as an anti-FlhDC factor; it directly binds FlhC, thus inhibiting the binding of the FlhC/FlhD complex to class 2 promoters, resulting in decreased expression of class 2 flagellar operons. As a chaperone, effects FliD transition to the membrane by preventing its premature polymerization, and by directing it to the export apparatus. In Photorhabdus laumondii subsp. laumondii (strain DSM 15139 / CIP 105565 / TT01) (Photorhabdus luminescens subsp. laumondii), this protein is Flagellar protein FliT.